The chain runs to 407 residues: Divalent metal cation transporter MntH (407 aa).

A run of 11 helical transmembrane segments spans residues 16–36 (LTLLGPAFIAAIGYIDPGNFA), 43–63 (STFGYQLLWVVVWANLMAMLV), 95–115 (WVQAEIIAMATDLAEFIGAAV), 119–139 (LLLGVTLLEGAGITAVVTWGI), 152–172 (FVVGGLLLFVAAAYIVELVFS), 193–213 (AVYLAAGVLGATVMPHVIYLH), 239–259 (IAMTIAGFVNLAMMAMAAAAF), 288–308 (LFGLSLVASGISSTVVGTLAG), 318–338 (FTIPLWLRRAITMAPAFVVIA), 346–366 (ILVLSQVVLSFGIALALIPLL), and 387–407 (VGRLIVALVIGLNAYLLVAMI).

The protein belongs to the NRAMP family.

Its subcellular location is the cell inner membrane. Functionally, h(+)-stimulated, divalent metal cation uptake system. This Aeromonas hydrophila subsp. hydrophila (strain ATCC 7966 / DSM 30187 / BCRC 13018 / CCUG 14551 / JCM 1027 / KCTC 2358 / NCIMB 9240 / NCTC 8049) protein is Divalent metal cation transporter MntH.